A 122-amino-acid chain; its full sequence is NLLQFEMMILKMAGRSGIRWYSDYGCYCGKGGHGQPQDATDRCCFVHDCCYGKVSGCDPKDEFYKYSSDNNDIVCGGNNPCLKEICECDRDAAICFRDNLSTYNNKYWNVPSETCQVESEPC.

7 cysteine pairs are disulfide-bonded: Cys-26-Cys-115, Cys-28-Cys-44, Cys-43-Cys-95, Cys-49-Cys-122, Cys-50-Cys-88, Cys-57-Cys-81, and Cys-75-Cys-86. 3 residues coordinate Ca(2+): Tyr-27, Gly-29, and Gly-31. His-47 is an active-site residue. Asp-48 is a Ca(2+) binding site. Asp-89 is an active-site residue.

Monomer. The cofactor is Ca(2+). Expressed by the venom gland.

The protein resides in the secreted. The catalysed reaction is a 1,2-diacyl-sn-glycero-3-phosphocholine + H2O = a 1-acyl-sn-glycero-3-phosphocholine + a fatty acid + H(+). Functionally, snake venom phospholipase A2 (PLA2) that impairs hemostasis. It weakly inhibits ADP-induced platelet aggregation when tested on platelet rich plasma from human and rabbit blood (15-25% of inhibition at 5-10 ug of enzyme), and dose-dependently inhibits blood coagulation, possibly by inhibiting thrombin activation. Exhibits high hydrolytic activities toward L-dipalmitoyl phosphatidylcholine. PLA2 catalyzes the calcium-dependent hydrolysis of the 2-acyl groups in 3-sn-phosphoglycerides. In Craspedocephalus puniceus (Flat-nosed pitviper), this protein is Acidic phospholipase A2 Tpu-E6c.